We begin with the raw amino-acid sequence, 166 residues long: Large ribosomal subunit protein uL10 (166 aa).

It belongs to the universal ribosomal protein uL10 family. In terms of assembly, part of the ribosomal stalk of the 50S ribosomal subunit. The N-terminus interacts with L11 and the large rRNA to form the base of the stalk. The C-terminus forms an elongated spine to which L12 dimers bind in a sequential fashion forming a multimeric L10(L12)X complex.

Its function is as follows. Forms part of the ribosomal stalk, playing a central role in the interaction of the ribosome with GTP-bound translation factors. The protein is Large ribosomal subunit protein uL10 of Geobacillus sp. (strain WCH70).